A 127-amino-acid chain; its full sequence is V-type proton ATPase subunit F (127 aa).

Belongs to the V-ATPase F subunit family. As to quaternary structure, V-ATPase is a heteromultimeric enzyme made up of two complexes: the ATP-hydrolytic V1 complex and the proton translocation V0 complex. The V1 complex consists of three catalytic AB heterodimers that form a heterohexamer, three peripheral stalks each consisting of EG heterodimers, one central rotor including subunits D and F, and the regulatory subunits C and H. The proton translocation complex V0 consists of the proton transport subunit a, a ring of proteolipid subunits c9c'', rotary subunit d, subunits e and f, and the accessory subunits VhaAC45 and ATP6AP2.

In terms of biological role, subunit of the V1 complex of vacuolar(H+)-ATPase (V-ATPase), a multisubunit enzyme composed of a peripheral complex (V1) that hydrolyzes ATP and a membrane integral complex (V0) that translocates protons. V-ATPase is responsible for acidifying and maintaining the pH of intracellular compartments and in some cell types, is targeted to the plasma membrane, where it is responsible for acidifying the extracellular environment. This is V-type proton ATPase subunit F from Aedes aegypti (Yellowfever mosquito).